Reading from the N-terminus, the 125-residue chain is MORF4 family-associated protein 1 (125 aa).

The tract at residues 76–99 (ESALNHLQGAGGAEPRGPRAEKAD) is disordered. Residues 94–124 (RAEKADEKAQEMAKMAEMLVQLVRRIEKSES) are a coiled coil.

Belongs to the MORF4 family-associated protein family. In terms of assembly, found in a complex composed of MORF4L1, MRFAP1 and RB1. Interacts via its N-terminus with MORF4L1. Interacts with CSTB and MORF4L2. As to expression, widely expressed in all tissues examined and as early as 7 days during embryonic development.

It is found in the nucleus. It localises to the cytoplasm. The protein resides in the perinuclear region. The protein is MORF4 family-associated protein 1 of Mus musculus (Mouse).